A 130-amino-acid chain; its full sequence is MYSAVTRGIEVTVEPFYLEVQSEPEENRYVWGYRVTIVNNSSETVQLCSRYWQITDANGHVQEVRGSGVVGKQPVLDPGDSYQYSSGCPLTTSSGVMVGRYQMKGEDGAQFEIEIPAFSLDVPEQRRTLN.

Residues 3 to 127 enclose the ApaG domain; it reads SAVTRGIEVT…FSLDVPEQRR (125 aa).

This chain is Protein ApaG, found in Brucella abortus (strain S19).